A 242-amino-acid chain; its full sequence is Lysosomal membrane ascorbate-dependent ferrireductase CYB561A3 (242 aa).

Over 1 to 4 the chain is Cytoplasmic; that stretch reads MASG. A helical transmembrane segment spans residues 5 to 25; sequence WFYLSCMVLGSLGSMCILFTA. Positions 12–219 constitute a Cytochrome b561 domain; it reads VLGSLGSMCI…FGLLVLYVLL (208 aa). Residues 26–40 lie on the Lumenal side of the membrane; the sequence is YWMQYWRGGFAWDGT. Residues 41 to 61 traverse the membrane as a helical segment; that stretch reads VLMFNWHPVLMVAGMVVLYGA. Residues H47 and R67 each contribute to the heme b site. The Cytoplasmic portion of the chain corresponds to 62 to 81; it reads ASLVYRLPSSWVGPRLPWKV. Positions 76 and 80 each coordinate L-ascorbate. The chain crosses the membrane as a helical span at residues 82–102; that stretch reads LHAALHLLAFTCTVVGLIAVF. Heme b contacts are provided by residues H83, 112-115, and H117; that span reads HLYS. The Lumenal segment spans residues 103–119; sequence RFHNHSRIAHLYSLHSW. Residues 120–140 form a helical membrane-spanning segment; sequence LGITTVVLFACQWFLGFAVFL. Over 141 to 154 the chain is Cytoplasmic; that stretch reads LPWASQWLRSLLKP. R149 contacts L-ascorbate. A helical transmembrane segment spans residues 155–175; the sequence is LHVFFGACILSLSITSVISGI. Residues H156 and E177 each contribute to the heme b site. The Lumenal portion of the chain corresponds to 176 to 202; that stretch reads NEKLFFVLKNATKPYSSLPGEAVFANS. A helical transmembrane segment spans residues 203–223; the sequence is TGLLVVAFGLLVLYVLLASSW. K224 is a binding site for heme b. Residues 224-242 lie on the Cytoplasmic side of the membrane; that stretch reads KRPDPGALTDRQPLLHDRE.

Homodimer. Requires heme b as cofactor. N-glycosylated. In terms of tissue distribution, present in lung, spleen, thymus and testis. Present at low level in brain, heart, liver and kidney. Expressed in the alveolar macrophages of the lung, in the white pulp of the spleen, widespread in the thymus, and in the Sertoli cells of the testis (at protein level).

It is found in the late endosome membrane. It localises to the lysosome membrane. The enzyme catalyses Fe(3+)(out) + L-ascorbate(in) = monodehydro-L-ascorbate radical(in) + Fe(2+)(out) + H(+). Functionally, transmembrane reductase that uses ascorbate as an electron donor in the cytoplasm and transfers electrons across membranes to reduce iron cations Fe(3+) into Fe(2+) in the lumen of the late endosome and lysosome. Reduced iron can then be extruded from the late endosome and lysosome to the cytoplasm by divalent metal-specific transporters. It is therefore most probably involved in endosomal and lysosomal cellular iron homeostasis. The protein is Lysosomal membrane ascorbate-dependent ferrireductase CYB561A3 of Mus musculus (Mouse).